We begin with the raw amino-acid sequence, 666 residues long: tRNA 5-methylaminomethyl-2-thiouridine biosynthesis bifunctional protein MnmC (666 aa).

The tract at residues 1 to 253 (MSSPFVPIIT…KRHMICAHYE (253 aa)) is tRNA (mnm(5)s(2)U34)-methyltransferase. Residues 283-666 (VGGGLAGCFI…FLRKKIIQGP (384 aa)) form an FAD-dependent cmnm(5)s(2)U34 oxidoreductase region.

In the N-terminal section; belongs to the methyltransferase superfamily. tRNA (mnm(5)s(2)U34)-methyltransferase family. This sequence in the C-terminal section; belongs to the DAO family. FAD serves as cofactor.

It localises to the cytoplasm. The catalysed reaction is 5-aminomethyl-2-thiouridine(34) in tRNA + S-adenosyl-L-methionine = 5-methylaminomethyl-2-thiouridine(34) in tRNA + S-adenosyl-L-homocysteine + H(+). Functionally, catalyzes the last two steps in the biosynthesis of 5-methylaminomethyl-2-thiouridine (mnm(5)s(2)U) at the wobble position (U34) in tRNA. Catalyzes the FAD-dependent demodification of cmnm(5)s(2)U34 to nm(5)s(2)U34, followed by the transfer of a methyl group from S-adenosyl-L-methionine to nm(5)s(2)U34, to form mnm(5)s(2)U34. This is tRNA 5-methylaminomethyl-2-thiouridine biosynthesis bifunctional protein MnmC from Legionella pneumophila (strain Lens).